Consider the following 690-residue polypeptide: Hypersensitivity response secretion protein HrcV (690 aa).

6 helical membrane passes run 14-36 (IGIA…TMLI), 48-72 (VVLL…LLLF), 104-128 (LVVG…FIVI), 196-216 (AIAG…IGIT), 229-253 (FAVL…AAGV), and 291-315 (LLMG…LIFV).

The protein belongs to the FHIPEP (flagella/HR/invasion proteins export pore) family.

Its subcellular location is the cell inner membrane. Functionally, involved in the secretion of PopA, a proteinaceous elicitor of the hypersensitivity response in plants. This is Hypersensitivity response secretion protein HrcV (hrcV) from Ralstonia nicotianae (strain ATCC BAA-1114 / GMI1000) (Ralstonia solanacearum).